The chain runs to 366 residues: Chorismate synthase (366 aa).

NADP(+) is bound at residue Arg-48. FMN-binding positions include 125-127, Gly-283, 298-302, and Arg-324; these read RSS and KPTPS.

Belongs to the chorismate synthase family. Homotetramer. FMNH2 is required as a cofactor.

The enzyme catalyses 5-O-(1-carboxyvinyl)-3-phosphoshikimate = chorismate + phosphate. It participates in metabolic intermediate biosynthesis; chorismate biosynthesis; chorismate from D-erythrose 4-phosphate and phosphoenolpyruvate: step 7/7. Functionally, catalyzes the anti-1,4-elimination of the C-3 phosphate and the C-6 proR hydrogen from 5-enolpyruvylshikimate-3-phosphate (EPSP) to yield chorismate, which is the branch point compound that serves as the starting substrate for the three terminal pathways of aromatic amino acid biosynthesis. This reaction introduces a second double bond into the aromatic ring system. The polypeptide is Chorismate synthase (Lachnospira eligens (strain ATCC 27750 / DSM 3376 / VPI C15-48 / C15-B4) (Eubacterium eligens)).